The chain runs to 246 residues: Small ribosomal subunit protein uS2 (246 aa).

The protein belongs to the universal ribosomal protein uS2 family.

The protein is Small ribosomal subunit protein uS2 of Burkholderia pseudomallei (strain 668).